The following is a 498-amino-acid chain: Protein DETOXIFICATION 30 (498 aa).

12 consecutive transmembrane segments (helical) span residues 64–86 (YSLGAATQVFAGHISTIALAAVS), 91–111 (VIAGFSFGVMLGMGSALETLC), 136–156 (VTAVILSLLYIFAAPILAFIG), 161–181 (ISSATGIFSIYMIPQIFAYAV), 197–217 (VMAAISAVALVLHVLLTWFVI), 227–247 (LAVVLNASWWFIVVAQLVYIF), 277–297 (AVMLCLEVWYLMAVILFAGYL), 302–322 (ISVAALSICMNILGWTAMIAI), 349–369 (LVAVITSTVIGLAISIALLIF), 393–413 (ILAVSIVINNVQPVLSGVAVG), 419–439 (VVAYVNIVCYYVFGIPFGLLL), and 447–467 (VMGIWCGMLTGTVVQTIVLTW).

This sequence belongs to the multi antimicrobial extrusion (MATE) (TC 2.A.66.1) family.

Its subcellular location is the membrane. The sequence is that of Protein DETOXIFICATION 30 from Arabidopsis thaliana (Mouse-ear cress).